A 316-amino-acid polypeptide reads, in one-letter code: Acetyl-coenzyme A carboxylase carboxyl transferase subunit beta (316 aa).

The CoA carboxyltransferase N-terminal domain occupies 39–308; it reads LWHKCSKCGV…TPPMVLWETM (270 aa). The Zn(2+) site is built by cysteine 43, cysteine 46, cysteine 62, and cysteine 65. The C4-type zinc-finger motif lies at 43–65; sequence CSKCGVLTYTKDLRANQMVCVEC.

Belongs to the AccD/PCCB family. As to quaternary structure, acetyl-CoA carboxylase is a heterohexamer composed of biotin carboxyl carrier protein (AccB), biotin carboxylase (AccC) and two subunits each of ACCase subunit alpha (AccA) and ACCase subunit beta (AccD). Zn(2+) is required as a cofactor.

The protein resides in the cytoplasm. The catalysed reaction is N(6)-carboxybiotinyl-L-lysyl-[protein] + acetyl-CoA = N(6)-biotinyl-L-lysyl-[protein] + malonyl-CoA. It participates in lipid metabolism; malonyl-CoA biosynthesis; malonyl-CoA from acetyl-CoA: step 1/1. Component of the acetyl coenzyme A carboxylase (ACC) complex. Biotin carboxylase (BC) catalyzes the carboxylation of biotin on its carrier protein (BCCP) and then the CO(2) group is transferred by the transcarboxylase to acetyl-CoA to form malonyl-CoA. The sequence is that of Acetyl-coenzyme A carboxylase carboxyl transferase subunit beta from Trichormus variabilis (strain ATCC 29413 / PCC 7937) (Anabaena variabilis).